The sequence spans 61 residues: Photosystem II reaction center protein K (61 aa).

A propeptide spanning residues 1 to 24 (MLNIFSLICICLNSALYSSNFFFA) is cleaved from the precursor. Residues 40–60 (MPVIPLFFFLLAFVWQAAVSF) traverse the membrane as a helical segment.

The protein belongs to the PsbK family. In terms of assembly, PSII is composed of 1 copy each of membrane proteins PsbA, PsbB, PsbC, PsbD, PsbE, PsbF, PsbH, PsbI, PsbJ, PsbK, PsbL, PsbM, PsbT, PsbX, PsbY, PsbZ, Psb30/Ycf12, at least 3 peripheral proteins of the oxygen-evolving complex and a large number of cofactors. It forms dimeric complexes.

It localises to the plastid. The protein resides in the chloroplast thylakoid membrane. One of the components of the core complex of photosystem II (PSII). PSII is a light-driven water:plastoquinone oxidoreductase that uses light energy to abstract electrons from H(2)O, generating O(2) and a proton gradient subsequently used for ATP formation. It consists of a core antenna complex that captures photons, and an electron transfer chain that converts photonic excitation into a charge separation. The chain is Photosystem II reaction center protein K from Vitis vinifera (Grape).